The primary structure comprises 709 residues: Putative extracellular sulfatase Sulf-1 homolog (709 aa).

The first 27 residues, 1-27 (MISNLRISNYFIIFYVLFLIIPIKVTS), serve as a signal peptide directing secretion. Residues aspartate 43, aspartate 44, and cysteine 79 each contribute to the Ca(2+) site. The active-site Nucleophile is cysteine 79. Position 79 is a 3-oxoalanine (Cys) (cysteine 79). 3 N-linked (GlcNAc...) asparagine glycosylation sites follow: asparagine 103, asparagine 162, and asparagine 189. Residues aspartate 308 and histidine 309 each contribute to the Ca(2+) site. N-linked (GlcNAc...) asparagine glycosylation is found at asparagine 344, asparagine 468, asparagine 500, asparagine 540, asparagine 566, asparagine 610, and asparagine 620.

This sequence belongs to the sulfatase family. It depends on Ca(2+) as a cofactor. Post-translationally, the conversion to 3-oxoalanine (also known as C-formylglycine, FGly), of a serine or cysteine residue in prokaryotes and of a cysteine residue in eukaryotes, is critical for catalytic activity.

It localises to the endoplasmic reticulum. Its subcellular location is the golgi apparatus. The protein resides in the golgi stack. It is found in the cell surface. The sequence is that of Putative extracellular sulfatase Sulf-1 homolog (sul-1) from Caenorhabditis elegans.